A 316-amino-acid chain; its full sequence is MSNREQSLATPYLQFNRSQWAALRDSVPLTLTEEEIVKLKGINEDLSLDEVAEIYLPLSRLLNFYISSNLRRQAVLEQFLGTDGQKIPYIIGIAGSVAVGKSTTARVLQALLSRWPEHRSVELITTDGFLHPNKVLKERDLMKKKGFPQSYDMHSLVKFVSDIKSGTHKVTAPTYSHLTYDIVPNNNKVLEQPDILILEGLNVLQSGMDYPHDPHRVFVSDFVDFSIYVDAPETLLQTWYINRFLKFRQGAFSNPNSYFHNYAKLTEEEAVGIASQLWKEINGLNLKENILPTRERASLIMTKSANHAVECVRLRK.

Gly95–Ser102 lines the ATP pocket.

Belongs to the prokaryotic pantothenate kinase family.

The protein localises to the cytoplasm. It catalyses the reaction (R)-pantothenate + ATP = (R)-4'-phosphopantothenate + ADP + H(+). It participates in cofactor biosynthesis; coenzyme A biosynthesis; CoA from (R)-pantothenate: step 1/5. This Pectobacterium carotovorum subsp. carotovorum (strain PC1) protein is Pantothenate kinase.